The primary structure comprises 81 residues: Cytotoxin 4N (81 aa).

A signal peptide spans Met1–Thr21. 4 disulfide bridges follow: Cys24–Cys42, Cys35–Cys59, Cys63–Cys74, and Cys75–Cys80.

Belongs to the three-finger toxin family. Short-chain subfamily. Type IA cytotoxin sub-subfamily. As to quaternary structure, monomer in solution; Homodimer and oligomer in the presence of negatively charged lipids forming a pore with a size ranging between 20 and 30 Angstroms. As to expression, expressed by the venom gland.

The protein localises to the secreted. The protein resides in the target cell membrane. Shows cytolytic activity on many different cells by forming pore in lipid membranes. In vivo, increases heart rate or kills the animal by cardiac arrest. In addition, it binds to heparin with high affinity, interacts with Kv channel-interacting protein 1 (KCNIP1) in a calcium-independent manner, and binds to integrin alpha-V/beta-3 (ITGAV/ITGB3) with moderate affinity. The sequence is that of Cytotoxin 4N from Naja atra (Chinese cobra).